A 388-amino-acid chain; its full sequence is tRNA-specific adenosine deaminase 1 (388 aa).

Residues 63–388 (CLATGVKCTP…PNGGNEFQWI (326 aa)) enclose the A to I editase domain. Histidine 89 lines the Zn(2+) pocket. The active-site Proton donor is glutamate 91. Arginine 96 is a binding site for 1D-myo-inositol hexakisphosphate. Zn(2+) is bound by residues cysteine 144 and cysteine 201. Lysine 204, lysine 357, and arginine 363 together coordinate 1D-myo-inositol hexakisphosphate.

The protein belongs to the ADAT1 family. The cofactor is 1D-myo-inositol hexakisphosphate. It depends on Zn(2+) as a cofactor.

It localises to the cytoplasm. The protein localises to the nucleus. The catalysed reaction is adenosine(37) in tRNA(Ala) + H2O + H(+) = inosine(37) in tRNA(Ala) + NH4(+). Deaminates adenosine-37 to inosine in tRNA-Ala. The protein is tRNA-specific adenosine deaminase 1 of Schizosaccharomyces pombe (strain 972 / ATCC 24843) (Fission yeast).